A 154-amino-acid chain; its full sequence is Aspartate carbamoyltransferase regulatory chain (154 aa).

C109, C114, C138, and C141 together coordinate Zn(2+).

It belongs to the PyrI family. In terms of assembly, contains catalytic and regulatory chains. Zn(2+) serves as cofactor.

Involved in allosteric regulation of aspartate carbamoyltransferase. The protein is Aspartate carbamoyltransferase regulatory chain of Photorhabdus laumondii subsp. laumondii (strain DSM 15139 / CIP 105565 / TT01) (Photorhabdus luminescens subsp. laumondii).